The following is a 531-amino-acid chain: Galactose/methyl galactoside import permease protein MglC (531 aa).

10 helical membrane-spanning segments follow: residues Phe-193–Val-213, Met-239–Gly-259, Val-267–Pro-287, Val-300–Phe-320, Ile-326–Gly-346, Leu-376–Ile-396, Phe-424–Phe-444, Leu-461–Leu-481, Gly-483–Ile-503, and Thr-505–Val-525.

It belongs to the binding-protein-dependent transport system permease family. AraH/RbsC subfamily. The complex is composed of one ATP-binding protein (MglA), two transmembrane proteins (MglC) and a solute-binding protein (MglB).

The protein resides in the cell membrane. In terms of biological role, part of the ABC transporter complex MglABC involved in galactose/methyl galactoside import. Probably responsible for the translocation of the substrate across the membrane. This chain is Galactose/methyl galactoside import permease protein MglC (mglC), found in Treponema pallidum (strain Nichols).